A 22-amino-acid chain; its full sequence is Mu-conotoxin TIIIA (22 aa).

3 disulfides stabilise this stretch: Cys4–Cys16, Cys5–Cys21, and Cys11–Cys22. 4-hydroxyproline occurs at positions 8 and 18. Cys22 carries the post-translational modification Cysteine amide.

The protein belongs to the conotoxin M superfamily. In terms of tissue distribution, expressed by the venom duct.

The protein resides in the secreted. Mu-conotoxins block voltage-gated sodium channels (Nav). This synthetic toxin reversibly and potently blocks rNav1.4/SCN4A (IC(50) is 9 nM) and rNav1.2/SCN2A (IC(50) is 40 nM). It also moderately blocks rNav1.1/SCN1A, rNav1.3/SCN3A, and rNav1.6/SCN8A. The block of SCN1A and SCN2A is modified when beta-subunits are coexpressed with alpha subunits. Hence, blocks of channels containing beta-1 and beta-3 subunits are more potent (compared to channels without beta subunits), whereas blocks of channels containing beta-2 and beta-4 subunits are less potent (compared to channels without beta subunits). The polypeptide is Mu-conotoxin TIIIA (Conus tulipa (Fish-hunting cone snail)).